The following is a 255-amino-acid chain: tRNA (guanine-N(1)-)-methyltransferase (255 aa).

S-adenosyl-L-methionine is bound by residues Gly113 and 133 to 138 (IGDYVL).

This sequence belongs to the RNA methyltransferase TrmD family. In terms of assembly, homodimer.

It is found in the cytoplasm. It catalyses the reaction guanosine(37) in tRNA + S-adenosyl-L-methionine = N(1)-methylguanosine(37) in tRNA + S-adenosyl-L-homocysteine + H(+). Its function is as follows. Specifically methylates guanosine-37 in various tRNAs. This Chloroflexus aggregans (strain MD-66 / DSM 9485) protein is tRNA (guanine-N(1)-)-methyltransferase.